The chain runs to 842 residues: Oligopeptide transporter phomP2' (842 aa).

The disordered stretch occupies residues 1-58; it reads MEADPKVPFTDEMNIQDEHNWESGSWSSSRRSNDSNVTLLSRRSSVEQHEDERQKDSD. Residues 23–36 are compositionally biased toward low complexity; it reads SGSWSSSRRSNDSN. N-linked (GlcNAc...) asparagine glycosylation is found at asparagine 33 and asparagine 36. Positions 44–58 are enriched in basic and acidic residues; the sequence is SSVEQHEDERQKDSD. Helical transmembrane passes span 105–125, 177–197, 210–230, 268–288, 315–335, and 345–365; these read VWLL…VYYF, ALVV…GPLS, PWAI…VGLY, VFMA…FVFP, GFGL…SPLF, and FVGA…SDAL. Residues asparagine 386 and asparagine 398 are each glycosylated (N-linked (GlcNAc...) asparagine). Transmembrane regions (helical) follow at residues 415-435, 478-498, 505-525, and 585-605; these read AMHF…AVLF, AWYA…LYAG, WGLQ…GMLF, and WELL…NWAV. Residues 629–649 are compositionally biased toward gly residues; it reads QGLGLGQGGGGGGGGGGGGGQ. Residues 629–657 form a disordered region; that stretch reads QGLGLGQGGGGGGGGGGGGGQQQRAAGAH. A run of 3 helical transmembrane segments spans residues 668–688, 700–720, and 731–751; these read NFFS…FGGG, WLLP…WLIH, and WPLH…FPTT. Asparagine 752 is a glycosylation site (N-linked (GlcNAc...) asparagine). A helical membrane pass occupies residues 784–804; sequence AGLDCGAQLVQMVLGLAFLVF.

This sequence belongs to the oligopeptide OPT transporter family.

It localises to the membrane. Functionally, oligopeptide transporter; part of the gene cluster that mediates the biosynthesis of the phomopsins, a group of hexapeptide mycotoxins which infects lupins and causes lupinosis disease in livestock. This chain is Oligopeptide transporter phomP2', found in Diaporthe leptostromiformis (Lupinosis disease fungus).